The sequence spans 547 residues: Pyochelin synthase PchD (547 aa).

The protein belongs to the ATP-dependent AMP-binding enzyme family.

It catalyses the reaction salicylate + holo-[ACP] + ATP = salicyl-[ACP] + AMP + diphosphate. It participates in siderophore biosynthesis. It functions in the pathway antifungal biosynthesis. Involved in the biosynthesis of the siderophore pyochelin. Specifically adenylates salicylate and loads it onto the holo form of PchE via a thioester linkage to the phosphopanthetheine moiety. Is also involved in the synthesis of the antifungal antibiotic dihydroaeruginoic acid (Dha or hydroxyphenyl-thiazolinyl-carboxylate), a precursor of pyochelin. This Pseudomonas aeruginosa (strain ATCC 15692 / DSM 22644 / CIP 104116 / JCM 14847 / LMG 12228 / 1C / PRS 101 / PAO1) protein is Pyochelin synthase PchD.